Consider the following 414-residue polypeptide: Histidinol dehydrogenase (414 aa).

Tyr-116, Gln-177, and Asn-200 together coordinate NAD(+). Substrate is bound by residues Thr-223, Gln-245, and His-248. Zn(2+) is bound by residues Gln-245 and His-248. Active-site proton acceptor residues include Glu-313 and His-314. Substrate-binding residues include His-314, Asp-347, Glu-401, and His-406. Zn(2+) is bound at residue Asp-347. His-406 provides a ligand contact to Zn(2+).

It belongs to the histidinol dehydrogenase family. Zn(2+) serves as cofactor.

The catalysed reaction is L-histidinol + 2 NAD(+) + H2O = L-histidine + 2 NADH + 3 H(+). Its pathway is amino-acid biosynthesis; L-histidine biosynthesis; L-histidine from 5-phospho-alpha-D-ribose 1-diphosphate: step 9/9. Catalyzes the sequential NAD-dependent oxidations of L-histidinol to L-histidinaldehyde and then to L-histidine. The sequence is that of Histidinol dehydrogenase from Staphylococcus epidermidis (strain ATCC 35984 / DSM 28319 / BCRC 17069 / CCUG 31568 / BM 3577 / RP62A).